Here is a 380-residue protein sequence, read N- to C-terminus: GTP-binding protein 10 (380 aa).

The Obg domain occupies 13-148 (GNFVDNVRLY…RNIRLDLKLI (136 aa)). An OBG-type G domain is found at 149–344 (ADFGLVGFPN…LKSLIRQSLE (196 aa)). Residues 155-162 (GFPNAGKS), 202-206 (DLPGL), and 278-281 (NKMD) each bind GTP.

This sequence belongs to the TRAFAC class OBG-HflX-like GTPase superfamily. OBG GTPase family.

Its subcellular location is the nucleus. It is found in the nucleolus. May be involved in the ribosome maturation process. In Danio rerio (Zebrafish), this protein is GTP-binding protein 10 (gtpbp10).